A 122-amino-acid polypeptide reads, in one-letter code: Large ribosomal subunit protein uL14 (122 aa).

Belongs to the universal ribosomal protein uL14 family. As to quaternary structure, part of the 50S ribosomal subunit. Forms a cluster with proteins L3 and L19. In the 70S ribosome, L14 and L19 interact and together make contacts with the 16S rRNA in bridges B5 and B8.

In terms of biological role, binds to 23S rRNA. Forms part of two intersubunit bridges in the 70S ribosome. This Bifidobacterium animalis subsp. lactis (strain AD011) protein is Large ribosomal subunit protein uL14.